The following is a 237-amino-acid chain: Putative ATP-binding protein BMEII0108 (237 aa).

One can recognise an ABC transporter domain in the interval 5–205 (ISFNNVVMRY…DLPYPRTEAI (201 aa)). An ATP-binding site is contributed by 37-44 (GPSGCGKS).

This sequence belongs to the ABC transporter superfamily. As to quaternary structure, the complex is composed of two ATP-binding proteins (BMEII0108), two transmembrane proteins (BMEII0107) and a solute-binding protein (BMEII0109).

It localises to the cell inner membrane. In terms of biological role, probably part of an ABC transporter complex. Probably Responsible for energy coupling to the transport system. This Brucella melitensis biotype 1 (strain ATCC 23456 / CCUG 17765 / NCTC 10094 / 16M) protein is Putative ATP-binding protein BMEII0108.